We begin with the raw amino-acid sequence, 530 residues long: RNA-binding protein 39 (530 aa).

Positions 1–146 (MADDIDIEAM…PVREPIDNLT (146 aa)) are disordered. An N-acetylalanine modification is found at Ala2. Residues 14-32 (PYKKDENKLSSANGHEERS) are compositionally biased toward basic and acidic residues. Composition is skewed to basic residues over residues 33–56 (KKRK…KERK) and 64–95 (KKSK…RGRY). At Tyr95 the chain carries Phosphotyrosine. A phosphoserine mark is found at Ser97 and Ser100. Lys111 participates in a covalent cross-link: Glycyl lysine isopeptide (Lys-Gly) (interchain with G-Cter in SUMO2). Ser117 bears the Phosphoserine mark. Residue Lys119 forms a Glycyl lysine isopeptide (Lys-Gly) (interchain with G-Cter in SUMO2) linkage. Over residues 119–130 (KLSRRRSRSKSP) the composition is skewed to basic residues. A phosphoserine mark is found at Ser121 and Ser136. A compositionally biased stretch (basic and acidic residues) spans 131–146 (FRKDKSPVREPIDNLT). At Thr146 the chain carries Phosphothreonine. Residues 153–230 (RTVFCMQLAA…VPIIVQASQA (78 aa)) form the RRM 1 domain. Lys244 participates in a covalent cross-link: Glycyl lysine isopeptide (Lys-Gly) (interchain with G-Cter in SUMO2). Residues 250–328 (MRLYVGSLHF…RPMKVGHVTE (79 aa)) form the RRM 2 domain. An activating domain region spans residues 291 to 355 (KGYGFITFSD…RTGIDLGTTG (65 aa)). Positions 291–406 (KGYGFITFSD…IDLQTRLSQQ (116 aa)) are interaction with JUN. Phosphoserine is present on residues Ser334, Ser337, and Ser341. The interaction with ESR1 and ESR2 stretch occupies residues 355 to 406 (GRLQLMARLAEGTGLQIPPAAQQALQMSGSLAFGAVAEFSFVIDLQTRLSQQ). Residues 406–530 (QTEASALAAA…ATQLLVPSRR (125 aa)) form an interaction with NCOA6 region. Residues 445 to 508 (EIKDDVIEEC…KMITAAYVPL (64 aa)) form the RRM 3 domain.

This sequence belongs to the splicing factor SR family. As to quaternary structure, interacts with NCOA6 and JUN. Interacts with ESR1 and ESR2, in the presence of estradiol (E2). Interacts with RSRC1 (via Arg/Ser-rich domain). Interacts with SF3B1. Interacts with ZNF106 (via N-terminus). In terms of processing, aryl sulfonamide anticancer drugs, such as indisulam (E7070) or E7820, promote ubiquitination and subsequent degradation by the DCX(DCAF15) complex. RBM39 degradation results in splicing defects and death in cancer cell lines. Aryl sulfonamide anticancer drugs change the substrate specificity of DCAF15 by acting as a molecular glue that promotes binding between DCAF15 and weak affinity interactor RBM39. Widely expressed. Highly expressed in pancreas, skeletal muscle, lung and brain. Expressed at intermediate level in kidney, liver and heart.

Its subcellular location is the nucleus speckle. RNA-binding protein that acts as a pre-mRNA splicing factor. Acts by promoting exon inclusion via regulation of exon cassette splicing. Also acts as a transcriptional coactivator for steroid nuclear receptors ESR1/ER-alpha and ESR2/ER-beta, and JUN/AP-1, independently of the pre-mRNA splicing factor activity. The chain is RNA-binding protein 39 from Homo sapiens (Human).